Reading from the N-terminus, the 1416-residue chain is DNA-directed RNA polymerase subunit beta' (1416 aa).

The Zn(2+) site is built by cysteine 68, cysteine 70, cysteine 83, and cysteine 86. Residues aspartate 458, aspartate 460, and aspartate 462 each contribute to the Mg(2+) site. Zn(2+) contacts are provided by cysteine 811, cysteine 884, cysteine 891, and cysteine 894.

It belongs to the RNA polymerase beta' chain family. As to quaternary structure, the RNAP catalytic core consists of 2 alpha, 1 beta, 1 beta' and 1 omega subunit. When a sigma factor is associated with the core the holoenzyme is formed, which can initiate transcription. Mg(2+) serves as cofactor. The cofactor is Zn(2+).

The catalysed reaction is RNA(n) + a ribonucleoside 5'-triphosphate = RNA(n+1) + diphosphate. DNA-dependent RNA polymerase catalyzes the transcription of DNA into RNA using the four ribonucleoside triphosphates as substrates. The sequence is that of DNA-directed RNA polymerase subunit beta' from Francisella philomiragia subsp. philomiragia (strain ATCC 25017 / CCUG 19701 / FSC 153 / O#319-036).